The primary structure comprises 71 residues: Small ribosomal subunit protein bS21 (71 aa).

Belongs to the bacterial ribosomal protein bS21 family.

This chain is Small ribosomal subunit protein bS21, found in Marinobacter nauticus (strain ATCC 700491 / DSM 11845 / VT8) (Marinobacter aquaeolei).